The sequence spans 295 residues: Ribosomal protein L11 methyltransferase (295 aa).

Residues Thr-150, Gly-171, Asp-193, and Asn-232 each coordinate S-adenosyl-L-methionine.

The protein belongs to the methyltransferase superfamily. PrmA family.

Its subcellular location is the cytoplasm. The catalysed reaction is L-lysyl-[protein] + 3 S-adenosyl-L-methionine = N(6),N(6),N(6)-trimethyl-L-lysyl-[protein] + 3 S-adenosyl-L-homocysteine + 3 H(+). Functionally, methylates ribosomal protein L11. The polypeptide is Ribosomal protein L11 methyltransferase (Neisseria meningitidis serogroup A / serotype 4A (strain DSM 15465 / Z2491)).